The following is a 205-amino-acid chain: High frequency lysogenization protein HflD homolog (205 aa).

Belongs to the HflD family.

The protein resides in the cytoplasm. It is found in the cell inner membrane. This is High frequency lysogenization protein HflD homolog from Shewanella sp. (strain MR-4).